Reading from the N-terminus, the 72-residue chain is MIIPWQELEEETLNNIVESFILREGTDYGQCELSLEQKKQALLSQIQQGTVVIVWSELHESIDIKDKMDLLK.

It belongs to the UPF0270 family.

This is UPF0270 protein PM1156 from Pasteurella multocida (strain Pm70).